The primary structure comprises 839 residues: MLGLVKKIFGDSNEREVKKMFKRVESINALEPTIKALSDDQLREKTAEFKARLANGEELDKILNEAFAVVREASIRVLGMRHFDVQMIGGMVLQEGRISEMKTGEGKTLVATLATYLNALMGKGVHVVTVNEYLAERDSSIMGKLYNFLGLTVGLNKNGLNPEEKREAYACDITYGTNNEFGFDYLRDNMVLYKEQMVQRPLFFAIIDEVDSILIDEARTPLIISGSANKSTELYYICSHFVKRLEEEKDFTIDEKLKIVNLTDDGVSKVEQAFNIDNLYDTAHITLNHHITAALKAQVLFKRDVDYVVQEGEVVIVDEFTGRLMVGRRYSDGLHQAIEAKEGLRVQSESMTLATITLQNYFRMYEKLAGMTGTAKTEEEEFKKIYGLDVVVIPTNKPVQRVDSPDLVFKTEAAKYRAVVNDIVERHKKGQPILVGTISIENSERLSQMLKQKGVPHNVLNAKQHEREAEIVARAGVYGAVTIATNMAGRGTDIQLGEGVAELGGLHIIGTERHESRRIDNQLRGRAGRQGDPGSSQFFLSMQDELMRRFGADNIMNMMDRLGMEEDMPIESRLVTRAVESAQKRVEGSNFDARKGVLQYDDVMNQQRLVVYKQRKDILEHENLSDVALNMIYAVMERAVSLHCPKEEVPEDWDLQALADAANNGFLYEETITAKMLKGMEAEEILELLKAEVDKQYKQREEEIGESIREFEKVVILRAVDSKWMDHIDAMDQLRQGIHLRAYAQNDPLREYQFEGYEMYQGMLAAVQEEVAMYIMKAEVSQNLERQDVIRGQGIDMDNLQTSGPSDRPDPETSGDADPKNRAQRRAQEQERKRQNKKQ.

ATP contacts are provided by residues glutamine 86, 104–108 (GEGKT), and aspartate 493. The tract at residues 794 to 839 (GIDMDNLQTSGPSDRPDPETSGDADPKNRAQRRAQEQERKRQNKKQ) is disordered. Positions 807 to 833 (DRPDPETSGDADPKNRAQRRAQEQERK) are enriched in basic and acidic residues.

It belongs to the SecA family. In terms of assembly, monomer and homodimer. Part of the essential Sec protein translocation apparatus which comprises SecA, SecYEG and auxiliary proteins SecDF. Other proteins may also be involved.

The protein localises to the cell membrane. It is found in the cytoplasm. It carries out the reaction ATP + H2O + cellular proteinSide 1 = ADP + phosphate + cellular proteinSide 2.. Functionally, part of the Sec protein translocase complex. Interacts with the SecYEG preprotein conducting channel. Has a central role in coupling the hydrolysis of ATP to the transfer of proteins into and across the cell membrane, serving as an ATP-driven molecular motor driving the stepwise translocation of polypeptide chains across the membrane. This Brevibacillus brevis (strain 47 / JCM 6285 / NBRC 100599) protein is Protein translocase subunit SecA.